The primary structure comprises 214 residues: Dephospho-CoA kinase (214 aa).

Residues 3 to 202 (KIGLTGGIGS…DRWLALAGAA (200 aa)) enclose the DPCK domain. 11–16 (GSGKSR) is a binding site for ATP.

Belongs to the CoaE family.

It localises to the cytoplasm. It carries out the reaction 3'-dephospho-CoA + ATP = ADP + CoA + H(+). Its pathway is cofactor biosynthesis; coenzyme A biosynthesis; CoA from (R)-pantothenate: step 5/5. Its function is as follows. Catalyzes the phosphorylation of the 3'-hydroxyl group of dephosphocoenzyme A to form coenzyme A. The chain is Dephospho-CoA kinase from Bordetella pertussis (strain Tohama I / ATCC BAA-589 / NCTC 13251).